A 609-amino-acid polypeptide reads, in one-letter code: Arginine--tRNA ligase (609 aa).

Positions 132–142 match the 'HIGH' region motif; it reads ANPTSSLHVGH.

This sequence belongs to the class-I aminoacyl-tRNA synthetase family. Monomer.

It is found in the cytoplasm. It carries out the reaction tRNA(Arg) + L-arginine + ATP = L-arginyl-tRNA(Arg) + AMP + diphosphate. In Psychrobacter cryohalolentis (strain ATCC BAA-1226 / DSM 17306 / VKM B-2378 / K5), this protein is Arginine--tRNA ligase.